Here is a 1481-residue protein sequence, read N- to C-terminus: Chromosome partition protein MukB (1481 aa).

34–41 (GGNGAGKS) is an ATP binding site. 5 coiled-coil regions span residues 338-480 (SLVQ…QAYQ), 509-604 (QHLA…APVW), 780-805 (RAARENRLEALYQERDSLAERYATLS), 835-1116 (EAEI…AKAG), and 1210-1265 (EAIE…LQAV). The segment at 666–783 (PSGAEDSRMI…EVPLFGRAAR (118 aa)) is flexible hinge.

Belongs to the SMC family. MukB subfamily. Homodimerization via its hinge domain. Binds to DNA via its C-terminal region. Interacts, and probably forms a ternary complex, with MukE and MukF via its C-terminal region. The complex formation is stimulated by calcium or magnesium. Interacts with tubulin-related protein FtsZ.

The protein resides in the cytoplasm. It is found in the nucleoid. Its function is as follows. Plays a central role in chromosome condensation, segregation and cell cycle progression. Functions as a homodimer, which is essential for chromosome partition. Involved in negative DNA supercoiling in vivo, and by this means organize and compact chromosomes. May achieve or facilitate chromosome segregation by condensation DNA from both sides of a centrally located replisome during cell division. The polypeptide is Chromosome partition protein MukB (Yersinia enterocolitica serotype O:8 / biotype 1B (strain NCTC 13174 / 8081)).